The primary structure comprises 270 residues: ATP synthase subunit a (270 aa).

6 consecutive transmembrane segments (helical) span residues 27 to 47 (FWTFHVDTLAWSVVLGLVFIL), 90 to 110 (IAPLALTIFVWVLLMNLMDLI), 147 to 166 (VNMTFALSLGVFALMIFYSV), 182 to 202 (PFNTPWLYWFNFILELVSLIA), 211 to 231 (LFGNLYAGELIFILIAGTLGV), and 238 to 258 (FLWAAFHLLVIPLQAFIFMML).

Belongs to the ATPase A chain family. As to quaternary structure, F-type ATPases have 2 components, CF(1) - the catalytic core - and CF(0) - the membrane proton channel. CF(1) has five subunits: alpha(3), beta(3), gamma(1), delta(1), epsilon(1). CF(0) has three main subunits: a(1), b(2) and c(9-12). The alpha and beta chains form an alternating ring which encloses part of the gamma chain. CF(1) is attached to CF(0) by a central stalk formed by the gamma and epsilon chains, while a peripheral stalk is formed by the delta and b chains.

It is found in the cell inner membrane. Functionally, key component of the proton channel; it plays a direct role in the translocation of protons across the membrane. The chain is ATP synthase subunit a from Pseudoalteromonas atlantica (strain T6c / ATCC BAA-1087).